Here is a 648-residue protein sequence, read N- to C-terminus: Actin-related protein 5 (648 aa).

Residues 34 to 59 (LTKPRKDRKKEAAASEGSASQTTVEQ) are disordered. 2 coiled-coil regions span residues 277 to 311 (TAEQKQEKRRELAHRLLDIKKNREQEKLREDEQQL) and 340 to 364 (TLEDLDSLIATINSRIKRAQERAQS). Disordered regions lie at residues 357 to 385 (RAQERAQSGPRPSKQQERLNKMPKPPEGM) and 403 to 455 (GRKQ…GMND). Positions 414–428 (EQAKRHTHAAQERMR) are enriched in basic and acidic residues. Residues S471 and S473 each carry the phosphoserine modification.

The protein belongs to the actin family. ARP5 subfamily. In terms of assembly, component of the chromatin remodeling Ino80 complex.

The protein localises to the nucleus. Its function is as follows. Proposed core component of the chromatin remodeling Ino80 complex which is involved in transcriptional regulation, DNA replication and probably DNA repair. The protein is Actin-related protein 5 of Drosophila melanogaster (Fruit fly).